Here is a 443-residue protein sequence, read N- to C-terminus: Structure-specific endonuclease subunit SLX1 (443 aa).

The GIY-YIG domain occupies 13–93; the sequence is RVYVCYCLRS…QKPHASRHLR (81 aa). The tract at residues 121-140 is disordered; that stretch reads FPATRSSAPSSAASHDSGLN. The SLX1-type zinc finger occupies 361-419; sequence CGLCGGHINRHVPLSYTHCPHACDAVFHLTCLARYSLEQETRAHARTFCLPTSAWCPMC.

The protein belongs to the SLX1 family. As to quaternary structure, forms a heterodimer with SLX4. A divalent metal cation serves as cofactor.

It localises to the nucleus. In terms of biological role, catalytic subunit of the SLX1-SLX4 structure-specific endonuclease that resolves DNA secondary structures generated during DNA repair and recombination. Has endonuclease activity towards branched DNA substrates, introducing single-strand cuts in duplex DNA close to junctions with ss-DNA. The protein is Structure-specific endonuclease subunit SLX1 of Malassezia globosa (strain ATCC MYA-4612 / CBS 7966) (Dandruff-associated fungus).